The chain runs to 336 residues: Tryptophan--tRNA ligase 1 (336 aa).

ATP-binding positions include 9-11 (KPT) and 17-18 (GN). Residues 10–18 (PTGHLTLGN) carry the 'HIGH' region motif. Residue Asp-137 participates in L-tryptophan binding. Residues 149–151 (GED), Val-188, and 197–201 (KMGKS) contribute to the ATP site. The 'KMSKS' region signature appears at 197-201 (KMGKS).

The protein belongs to the class-I aminoacyl-tRNA synthetase family. As to quaternary structure, homodimer.

It localises to the cytoplasm. It carries out the reaction tRNA(Trp) + L-tryptophan + ATP = L-tryptophyl-tRNA(Trp) + AMP + diphosphate + H(+). Its function is as follows. Catalyzes the attachment of tryptophan to tRNA(Trp). The sequence is that of Tryptophan--tRNA ligase 1 from Streptomyces coelicolor (strain ATCC BAA-471 / A3(2) / M145).